The following is a 1041-amino-acid chain: Isoleucine--tRNA ligase (1041 aa).

Residues 53 to 63 carry the 'HIGH' region motif; sequence PFANGLPHYGH. The 'KMSKS' region signature appears at 619–623; that stretch reads KMSKS. Position 622 (K622) interacts with ATP.

This sequence belongs to the class-I aminoacyl-tRNA synthetase family. IleS type 2 subfamily. Monomer. The cofactor is Zn(2+).

It localises to the cytoplasm. It carries out the reaction tRNA(Ile) + L-isoleucine + ATP = L-isoleucyl-tRNA(Ile) + AMP + diphosphate. Catalyzes the attachment of isoleucine to tRNA(Ile). As IleRS can inadvertently accommodate and process structurally similar amino acids such as valine, to avoid such errors it has two additional distinct tRNA(Ile)-dependent editing activities. One activity is designated as 'pretransfer' editing and involves the hydrolysis of activated Val-AMP. The other activity is designated 'posttransfer' editing and involves deacylation of mischarged Val-tRNA(Ile). The sequence is that of Isoleucine--tRNA ligase from Mycobacterium bovis (strain ATCC BAA-935 / AF2122/97).